The sequence spans 596 residues: Probable tripeptidyl-peptidase SED2 (596 aa).

The signal sequence occupies residues 1–16 (MRLLKFVCLLASVAAA). The propeptide at 17-203 (KPTPGASHKV…LESMSVEEFA (187 aa)) is removed in mature form. A Peptidase S53 domain is found at 210–596 (LVTTACLREL…NFQALTKVLP (387 aa)). Residue N265 is glycosylated (N-linked (GlcNAc...) asparagine). Active-site charge relay system residues include E286 and D290. A glycan (N-linked (GlcNAc...) asparagine) is linked at N403. S501 functions as the Charge relay system in the catalytic mechanism. Residues D543 and I544 each contribute to the Ca(2+) site. N572 is a glycosylation site (N-linked (GlcNAc...) asparagine). The Ca(2+) site is built by G576 and D578.

It depends on Ca(2+) as a cofactor.

The protein localises to the secreted. It localises to the extracellular space. It carries out the reaction Release of an N-terminal tripeptide from a polypeptide.. Functionally, secreted tripeptidyl-peptidase which degrades proteins at acidic pHs and is involved in virulence. In Trichophyton verrucosum (strain HKI 0517), this protein is Probable tripeptidyl-peptidase SED2 (SED2).